The chain runs to 191 residues: uncharacterized protein (191 aa).

6 consecutive transmembrane segments (helical) span residues 4-24 (IYRQ…VLIF), 26-46 (KQLI…YFLC), 68-88 (GKGA…IDDI), 90-110 (AVFF…IIGI), 135-155 (LILY…SAFI), and 168-188 (LYLP…CSLM).

The protein resides in the cell membrane. This is an uncharacterized protein from Methanocaldococcus jannaschii (strain ATCC 43067 / DSM 2661 / JAL-1 / JCM 10045 / NBRC 100440) (Methanococcus jannaschii).